We begin with the raw amino-acid sequence, 110 residues long: Large ribosomal subunit protein uL22 (110 aa).

It belongs to the universal ribosomal protein uL22 family. Part of the 50S ribosomal subunit.

In terms of biological role, this protein binds specifically to 23S rRNA; its binding is stimulated by other ribosomal proteins, e.g. L4, L17, and L20. It is important during the early stages of 50S assembly. It makes multiple contacts with different domains of the 23S rRNA in the assembled 50S subunit and ribosome. The globular domain of the protein is located near the polypeptide exit tunnel on the outside of the subunit, while an extended beta-hairpin is found that lines the wall of the exit tunnel in the center of the 70S ribosome. This is Large ribosomal subunit protein uL22 from Buchnera aphidicola subsp. Acyrthosiphon pisum (strain 5A).